The primary structure comprises 358 residues: Transmembrane protein 144 homolog B (358 aa).

The next 10 membrane-spanning stretches (helical) occupy residues 6-26 (VIGY…YVPV), 35-55 (LAFT…AMFI), 60-79 (IFDP…NFCV), 86-108 (IGIG…FTGK), 122-142 (PALN…FFFI), 211-231 (ILGI…MVPM), 244-264 (LSFV…VFIV), 279-299 (IFPS…LMVA), 307-327 (IGFP…SVFY), and 337-357 (LLIL…LALS).

It belongs to the TMEM144 family.

The protein resides in the membrane. The chain is Transmembrane protein 144 homolog B (tmem144B) from Dictyostelium discoideum (Social amoeba).